Reading from the N-terminus, the 193-residue chain is Phosphoheptose isomerase (193 aa).

Positions 37 to 193 (LAASFKADGK…QLIEKEMASV (157 aa)) constitute an SIS domain. 52-54 (NGG) lines the substrate pocket. Positions 61 and 65 each coordinate Zn(2+). Substrate contacts are provided by residues Glu-65, 93 to 94 (ND), 119 to 121 (STS), Ser-124, and Gln-172. The Zn(2+) site is built by Gln-172 and His-180.

Belongs to the SIS family. GmhA subfamily. In terms of assembly, homotetramer. The cofactor is Zn(2+).

It localises to the cytoplasm. The catalysed reaction is 2 D-sedoheptulose 7-phosphate = D-glycero-alpha-D-manno-heptose 7-phosphate + D-glycero-beta-D-manno-heptose 7-phosphate. Its pathway is carbohydrate biosynthesis; D-glycero-D-manno-heptose 7-phosphate biosynthesis; D-glycero-alpha-D-manno-heptose 7-phosphate and D-glycero-beta-D-manno-heptose 7-phosphate from sedoheptulose 7-phosphate: step 1/1. In terms of biological role, catalyzes the isomerization of sedoheptulose 7-phosphate in D-glycero-D-manno-heptose 7-phosphate. This Edwardsiella ictaluri (strain 93-146) protein is Phosphoheptose isomerase.